The sequence spans 122 residues: Glycine cleavage system H protein (122 aa).

In terms of domain architecture, Lipoyl-binding spans 19–101; sequence MVTVGVTHYA…ETEGWLWKMT (83 aa). K60 is subject to N6-lipoyllysine.

This sequence belongs to the GcvH family. In terms of assembly, the glycine cleavage system is composed of four proteins: P, T, L and H. The cofactor is (R)-lipoate.

The glycine cleavage system catalyzes the degradation of glycine. The H protein shuttles the methylamine group of glycine from the P protein to the T protein. This Bartonella tribocorum (strain CIP 105476 / IBS 506) protein is Glycine cleavage system H protein.